A 195-amino-acid polypeptide reads, in one-letter code: uncharacterized protein (195 aa).

A signal peptide spans 1–20 (MLKFRLILTVLTVLLITVNG). The interval 26–195 (IENKSSTSSS…LHNQYPPQQN (170 aa)) is disordered. A glycan (N-linked (GlcNAc...) asparagine) is linked at N28. 2 stretches are compositionally biased toward low complexity: residues 29 to 43 (KSST…SKPS) and 74 to 104 (QSKT…GGNQ). Composition is skewed to polar residues over residues 112–123 (DPYQTGSYQGPY) and 151–176 (PKNT…NNGP).

Component of the acid-soluble organic matrix of calcified layers of the shell (at protein level).

Its subcellular location is the secreted. This is an uncharacterized protein from Lottia gigantea (Giant owl limpet).